The primary structure comprises 986 residues: MDNIFVPSNIYMVRTPIFSIELYNQFLKSDNIDYDLILQNDIFKESIMTTTYNLYQSIGKIDWEKDNKKTRNVKESLLKYLIRMSTRSTPYGMLSGVALGEFSENNNIKIKDSSFHKKDVKIDGQWLYKLVHYLESDYTYYKDSFVIWNQQNYIYNNRLYLDNNSSITENKRNDVLSVKYNSILVFIHENSKKNITYEELVQLISSKYSIENKEEVKVFVQELINKEIIFSDLRPTLENKNPLDYIINSLNPKNSLVGTLINISNEITKYSKMPLGKGEYKYLDIVNLMSQLFVSKNYLQIDTYIDYSRNELKQSLADNISEAAYILWLLSPNHFGTKTIRNYHEFFMDKYGFEQLVNLKQLLSDINGFGYPKKDSYSFSNNIAFLKEKYLLAIQNNSHIEITENDVKNLEKNNTVSKINAPVSTEIYSEIYFGNSIKGYEDFAVISPILGSFNAGATFGRFTGNFNIKKKNQLQKEIVHHYNNYMNENGLEISQLNEGPLNSRNVNILNNNRIYNTCLNLNLPKSDIDINDIFIGATFNKLYLYSEKHDSRIVFVSNSMFNYEFGSELYKFLREISFEKTKFIQPITEEGIDSLPFCPRIIYKNIILKPATWKINSEMFSETENWLNRFATIREKWHIPKDVIIAFGDNRLLLNLLNDKHLIILKKELKKHGRIRILESFINESNNERMLEIVTPLYKKTSLKEQSFIIPKNRNKHFNNLKDWFSIHLSIPKTYQDNFIQDYLLPFITELKVNNFINKFFYIKFKEDEDFIKLRLLREDEDYSQIYSFIKNWKDYCLLNSELYDYSIVDYVPEVYRYGGPHVIEDIENFFMYDSLLSINIIQSEFKIPKEFIVAISIDFLLDYLEINKSEKEEILINNAEDLYRSNDIREYKNLLAKLTNPKNDYEILKKEFPNLHEFLFNKISILENLKKTLQKSLYTSRSRIIGSFIHMRCNRIFGINPEKEKFVLSIFNEITKTKKYWDGCD.

This sequence to B.subtilis SpaB and L.lactis NisB.

The protein resides in the cell membrane. In terms of biological role, involved in the post-translational modification of the lantibiotic epidermin. The chain is Epidermin biosynthesis protein EpiB (epiB) from Staphylococcus epidermidis.